Reading from the N-terminus, the 475-residue chain is MSQTTDRLWGARFKSGPSAALAALSRCPERYFRLTPYDLAGSKAHAGELQRAGLLDEQETRTMIEALDGIGADFAAGRIAPTLDDEDVHTFIERLLTERLGALGGKLRAGRSRNDQTANDLRLFLRDHVRTLAVEVLALQTALVDQAEQHVESICPGFTHLQQAQPIVFAHHLLAHAQSMLRDVQRLMDWDARTSLSPLGAAAMAGSAIARQPQQSAKEMGYAGVCENSIDAVASRDHVAEFLFIASMLGINISRLAEEFCLWSSRQFRWVDLDDAYATGSSIMPQKKNPDIAELARGKAGRLIGNLTGLLSTLKSLPLSYNRDLSEDKNGVLDSVDTLLLVLPAMAGMVATMTVNVEELRRQAPLGFTLATEVADWLAVRGVPFKEAHEITGALVQACEKHDLELWEASPALLAEIDPRLTADVRDSLTLEAAIAARSGWGGTAPQQVREQIGRLKTALAAQQQWTENYQGFRL.

It belongs to the lyase 1 family. Argininosuccinate lyase subfamily.

It localises to the cytoplasm. The catalysed reaction is 2-(N(omega)-L-arginino)succinate = fumarate + L-arginine. Its pathway is amino-acid biosynthesis; L-arginine biosynthesis; L-arginine from L-ornithine and carbamoyl phosphate: step 3/3. This is Argininosuccinate lyase 1 from Pseudomonas fluorescens (strain Pf0-1).